The following is a 20-amino-acid chain: Ferric reductase A (20 aa).

As to quaternary structure, monomer.

The enzyme catalyses 2 a Fe(II)-siderophore + NAD(+) + H(+) = 2 a Fe(III)-siderophore + NADH. Its function is as follows. Reductase activity that acts on Fe(3+)-chelates and NADH as an electron donor and requires the presence of FMN for full activity. May play a role in iron uptake. This chain is Ferric reductase A (ferA), found in Paracoccus denitrificans.